Here is a 152-residue protein sequence, read N- to C-terminus: Xanthine-guanine phosphoribosyltransferase (152 aa).

5-phospho-alpha-D-ribose 1-diphosphate contacts are provided by residues 37–38, R69, and 88–96; these read RG and DDLVDTGGT. R69 provides a ligand contact to GMP. D89 is a binding site for Mg(2+). D92 and I135 together coordinate guanine. Xanthine is bound by residues D92 and I135. GMP is bound by residues 92–96 and 134–135; these read DTGGT and WI.

Belongs to the purine/pyrimidine phosphoribosyltransferase family. XGPT subfamily. Homotetramer. The cofactor is Mg(2+).

Its subcellular location is the cell inner membrane. It carries out the reaction GMP + diphosphate = guanine + 5-phospho-alpha-D-ribose 1-diphosphate. The catalysed reaction is XMP + diphosphate = xanthine + 5-phospho-alpha-D-ribose 1-diphosphate. It catalyses the reaction IMP + diphosphate = hypoxanthine + 5-phospho-alpha-D-ribose 1-diphosphate. The protein operates within purine metabolism; GMP biosynthesis via salvage pathway; GMP from guanine: step 1/1. Its pathway is purine metabolism; XMP biosynthesis via salvage pathway; XMP from xanthine: step 1/1. In terms of biological role, purine salvage pathway enzyme that catalyzes the transfer of the ribosyl-5-phosphate group from 5-phospho-alpha-D-ribose 1-diphosphate (PRPP) to the N9 position of the 6-oxopurines guanine and xanthine to form the corresponding ribonucleotides GMP (guanosine 5'-monophosphate) and XMP (xanthosine 5'-monophosphate), with the release of PPi. To a lesser extent, also acts on hypoxanthine. The sequence is that of Xanthine-guanine phosphoribosyltransferase from Citrobacter koseri (strain ATCC BAA-895 / CDC 4225-83 / SGSC4696).